An 830-amino-acid chain; its full sequence is Pentatricopeptide repeat-containing protein At5g55740, chloroplastic (830 aa).

The transit peptide at 1–59 (MASLPFNTIPNKVPFSVSSKPSSKHHDEQAHSPSSTSYFHRVSSLCKNGEIKEALSLVT) directs the protein to the chloroplast. The tract at residues 15 to 36 (FSVSSKPSSKHHDEQAHSPSST) is disordered. 19 PPR repeats span residues 69–103 (GPEIYGEILQGCVYERDLSTGKQIHARILKNGDFY), 106–136 (NEYIETKLVIFYAKCDALEIAEVLFSKLRVR), 137–171 (NVFSWAAIIGVKCRIGLCEGALMGFVEMLENEIFP), 172–206 (DNFVVPNVCKACGALKWSRFGRGVHGYVVKSGLED), 207–237 (CVFVASSLADMYGKCGVLDDASKVFDEIPDR), 238–272 (NAVAWNALMVGYVQNGKNEEAIRLFSDMRKQGVEP), 273–307 (TRVTVSTCLSASANMGGVEEGKQSHAIAIVNGMEL), 308–338 (DNILGTSLLNFYCKVGLIEYAEMVFDRMFEK), 339–373 (DVVTWNLIISGYVQQGLVEDAIYMCQLMRLEKLKY), 374–408 (DCVTLATLMSAAARTENLKLGKEVQCYCIRHSFES), 409–439 (DIVLASTVMDMYAKCGSIVDAKKVFDSTVEK), 440–474 (DLILWNTLLAAYAESGLSGEALRLFYGMQLEGVPP), 475–509 (NVITWNLIILSLLRNGQVDEAKDMFLQMQSSGIIP), 510–544 (NLISWTTMMNGMVQNGCSEEAILFLRKMQESGLRP), 545–575 (NAFSITVALSACAHLASLHIGRTIHGYIIRN), 581–611 (LVSIETSLVDMYAKCGDINKAEKVFGSKLYS), 612–646 (ELPLSNAMISAYALYGNLKEAIALYRSLEGVGLKP), 647–682 (DNITITNVLSACNHAGDINQAIEIFTDIVSKRSMKP), and 683–713 (CLEHYGLMVDLLASAGETEKALRLIEEMPFK). Residues 718 to 793 (MIQSLVASCN…KPGCSWIQIT (76 aa)) are type E motif. Residues 796–826 (EGVHVFVANDKTHTRINEIQMMLALLLYDMG) are type E(+) motif.

It belongs to the PPR family. PCMP-E subfamily.

The protein resides in the plastid. Its subcellular location is the chloroplast. Plays a major role in chloroplast RNA editing. Acts as a site-recognition transacting factor involved in the edition of the site 2 of ndhD (ndhD-2), which encodes a subunit of the NDH complex. The polypeptide is Pentatricopeptide repeat-containing protein At5g55740, chloroplastic (CRR21) (Arabidopsis thaliana (Mouse-ear cress)).